The chain runs to 332 residues: 2,3-diketo-L-gulonate reductase (332 aa).

H44 acts as the Proton donor in catalysis. Residues 168–174, 224–225, and 304–306 contribute to the NAD(+) site; these read ITMVDMS, WK, and GHE.

Belongs to the LDH2/MDH2 oxidoreductase family. DlgD subfamily. Homodimer.

Its subcellular location is the cytoplasm. The enzyme catalyses 3-dehydro-L-gulonate + NAD(+) = 2,3-dioxo-L-gulonate + NADH + H(+). The catalysed reaction is 3-dehydro-L-gulonate + NADP(+) = 2,3-dioxo-L-gulonate + NADPH + H(+). Functionally, catalyzes the reduction of 2,3-diketo-L-gulonate in the presence of NADH, to form 3-keto-L-gulonate. In Escherichia coli O139:H28 (strain E24377A / ETEC), this protein is 2,3-diketo-L-gulonate reductase.